We begin with the raw amino-acid sequence, 195 residues long: HTH-type transcriptional regulator BetI (195 aa).

Residues 8–68 (EIRRAQLIDA…ATMRHVLRDL (61 aa)) enclose the HTH tetR-type domain. The segment at residues 31-50 (TLASVAQRASISTGIVSHYF) is a DNA-binding region (H-T-H motif).

The protein operates within amine and polyamine biosynthesis; betaine biosynthesis via choline pathway [regulation]. Its function is as follows. Repressor involved in the biosynthesis of the osmoprotectant glycine betaine. It represses transcription of the choline transporter BetT and the genes of BetAB involved in the synthesis of glycine betaine. The chain is HTH-type transcriptional regulator BetI from Paraburkholderia xenovorans (strain LB400).